A 612-amino-acid polypeptide reads, in one-letter code: Siderophore iron transporter 1 (612 aa).

Residues Ser5, Ser21, Ser22, Ser36, and Ser41 each carry the phosphoserine modification. The next 14 membrane-spanning stretches (helical) occupy residues 91 to 111, 125 to 145, 159 to 179, 188 to 208, 218 to 238, 249 to 269, 299 to 319, 331 to 351, 365 to 385, 406 to 426, 434 to 453, 464 to 484, 495 to 515, and 573 to 593; these read ISFY…SFQA, FAGH…SAAI, LEAF…MAAS, GSVL…IFMA, LVLG…PRVA, WGIA…LAVY, IIGL…ISLA, FIVM…YEIF, EPTI…FYCW, YISY…GILI, WYFV…MIRY, IMPQ…LTVA, AIVT…GSAI, and ILTS…WFVA.

The protein belongs to the major facilitator superfamily.

The protein localises to the membrane. Involved in the transport of siderophore iron and so has a role in iron homeostasis. In Schizosaccharomyces pombe (strain 972 / ATCC 24843) (Fission yeast), this protein is Siderophore iron transporter 1 (str1).